A 271-amino-acid polypeptide reads, in one-letter code: Phosphatidylglycerol--prolipoprotein diacylglyceryl transferase (271 aa).

The next 7 helical transmembrane spans lie at 21 to 41, 60 to 80, 95 to 115, 124 to 144, 177 to 197, 203 to 223, and 236 to 256; these read LAVRWYGLMYLVGFLFAMWLA, LLFAGFLGVVIGGRVGYVIFY, VWTGGMSFHGGLLGVITAMFW, FFGVADFVAPLVPFGLGMGRI, QLYEFALEGVVLFFILNWFIG, GSVSGLFLAGYGTFRFLVEYV, and FISMGQILSLPMVIIGILMMV. A 1,2-diacyl-sn-glycero-3-phospho-(1'-sn-glycerol) is bound at residue R143.

It belongs to the Lgt family.

It is found in the cell inner membrane. The catalysed reaction is L-cysteinyl-[prolipoprotein] + a 1,2-diacyl-sn-glycero-3-phospho-(1'-sn-glycerol) = an S-1,2-diacyl-sn-glyceryl-L-cysteinyl-[prolipoprotein] + sn-glycerol 1-phosphate + H(+). Its pathway is protein modification; lipoprotein biosynthesis (diacylglyceryl transfer). Functionally, catalyzes the transfer of the diacylglyceryl group from phosphatidylglycerol to the sulfhydryl group of the N-terminal cysteine of a prolipoprotein, the first step in the formation of mature lipoproteins. The sequence is that of Phosphatidylglycerol--prolipoprotein diacylglyceryl transferase from Vibrio cholerae serotype O1 (strain ATCC 39541 / Classical Ogawa 395 / O395).